A 387-amino-acid chain; its full sequence is Succinate--CoA ligase [ADP-forming] subunit beta (387 aa).

ATP contacts are provided by residues Lys46, 53-55 (GRG), Glu99, Ala102, and Glu107. Mg(2+) is bound by residues Asn199 and Asp213. Substrate is bound by residues Asn264 and 321–323 (GIV).

This sequence belongs to the succinate/malate CoA ligase beta subunit family. As to quaternary structure, heterotetramer of two alpha and two beta subunits. The cofactor is Mg(2+).

The enzyme catalyses succinate + ATP + CoA = succinyl-CoA + ADP + phosphate. The catalysed reaction is GTP + succinate + CoA = succinyl-CoA + GDP + phosphate. The protein operates within carbohydrate metabolism; tricarboxylic acid cycle; succinate from succinyl-CoA (ligase route): step 1/1. Its function is as follows. Succinyl-CoA synthetase functions in the citric acid cycle (TCA), coupling the hydrolysis of succinyl-CoA to the synthesis of either ATP or GTP and thus represents the only step of substrate-level phosphorylation in the TCA. The beta subunit provides nucleotide specificity of the enzyme and binds the substrate succinate, while the binding sites for coenzyme A and phosphate are found in the alpha subunit. In Campylobacter jejuni subsp. doylei (strain ATCC BAA-1458 / RM4099 / 269.97), this protein is Succinate--CoA ligase [ADP-forming] subunit beta.